Reading from the N-terminus, the 37-residue chain is Large ribosomal subunit protein bL36c (37 aa).

It belongs to the bacterial ribosomal protein bL36 family.

It is found in the plastid. Its subcellular location is the chloroplast. The protein is Large ribosomal subunit protein bL36c of Chaetosphaeridium globosum (Charophycean green alga).